The primary structure comprises 452 residues: Phosphoglucosamine mutase (452 aa).

The Phosphoserine intermediate role is filled by S104. Mg(2+)-binding residues include S104, D245, D247, and D249. At S104 the chain carries Phosphoserine.

This sequence belongs to the phosphohexose mutase family. The cofactor is Mg(2+). Post-translationally, activated by phosphorylation.

The enzyme catalyses alpha-D-glucosamine 1-phosphate = D-glucosamine 6-phosphate. Functionally, catalyzes the conversion of glucosamine-6-phosphate to glucosamine-1-phosphate. The sequence is that of Phosphoglucosamine mutase from Gluconacetobacter diazotrophicus (strain ATCC 49037 / DSM 5601 / CCUG 37298 / CIP 103539 / LMG 7603 / PAl5).